We begin with the raw amino-acid sequence, 203 residues long: Outer-membrane lipoprotein carrier protein (203 aa).

The first 21 residues, 1-21 (MKKLLVACCLLSGLISAHALA), serve as a signal peptide directing secretion.

It belongs to the LolA family. In terms of assembly, monomer.

The protein resides in the periplasm. Participates in the translocation of lipoproteins from the inner membrane to the outer membrane. Only forms a complex with a lipoprotein if the residue after the N-terminal Cys is not an aspartate (The Asp acts as a targeting signal to indicate that the lipoprotein should stay in the inner membrane). This is Outer-membrane lipoprotein carrier protein from Yersinia enterocolitica serotype O:8 / biotype 1B (strain NCTC 13174 / 8081).